The following is a 310-amino-acid chain: tRNA pseudouridine synthase B (310 aa).

Aspartate 49 acts as the Nucleophile in catalysis.

Belongs to the pseudouridine synthase TruB family. Type 1 subfamily.

It catalyses the reaction uridine(55) in tRNA = pseudouridine(55) in tRNA. Its function is as follows. Responsible for synthesis of pseudouridine from uracil-55 in the psi GC loop of transfer RNAs. The polypeptide is tRNA pseudouridine synthase B (Rhizobium etli (strain ATCC 51251 / DSM 11541 / JCM 21823 / NBRC 15573 / CFN 42)).